A 147-amino-acid polypeptide reads, in one-letter code: Protegrin-2 (147 aa).

An N-terminal signal peptide occupies residues 1-29 (METQRASLCLGRWSLWLLLLALVVPSASA). The propeptide occupies 30–130 (QALSYREAVL…DITCNEVQGV (101 aa)). The tract at residues 61–80 (DQPPKADEDPGTPKPVSFTV) is disordered. 4 disulfide bridges follow: cysteine 85/cysteine 96, cysteine 107/cysteine 124, cysteine 136/cysteine 145, and cysteine 138/cysteine 143. Valine 146 is modified (valine amide).

This sequence belongs to the cathelicidin family.

The protein localises to the secreted. Its function is as follows. Microbicidal activity. Active against E.coli, Listeria monocytogenes and C.albicans, in vitro. This Sus scrofa (Pig) protein is Protegrin-2 (NPG2).